A 206-amino-acid polypeptide reads, in one-letter code: Ribosomal RNA large subunit methyltransferase E (206 aa).

Positions 60, 62, 80, 96, and 121 each coordinate S-adenosyl-L-methionine. Lys-161 (proton acceptor) is an active-site residue.

Belongs to the class I-like SAM-binding methyltransferase superfamily. RNA methyltransferase RlmE family.

It localises to the cytoplasm. It carries out the reaction uridine(2552) in 23S rRNA + S-adenosyl-L-methionine = 2'-O-methyluridine(2552) in 23S rRNA + S-adenosyl-L-homocysteine + H(+). Its function is as follows. Specifically methylates the uridine in position 2552 of 23S rRNA at the 2'-O position of the ribose in the fully assembled 50S ribosomal subunit. This Hydrogenovibrio crunogenus (strain DSM 25203 / XCL-2) (Thiomicrospira crunogena) protein is Ribosomal RNA large subunit methyltransferase E.